Reading from the N-terminus, the 353-residue chain is Protein RecA (353 aa).

75-82 provides a ligand contact to ATP; it reads GPESSGKT.

Belongs to the RecA family.

It is found in the cytoplasm. In terms of biological role, can catalyze the hydrolysis of ATP in the presence of single-stranded DNA, the ATP-dependent uptake of single-stranded DNA by duplex DNA, and the ATP-dependent hybridization of homologous single-stranded DNAs. It interacts with LexA causing its activation and leading to its autocatalytic cleavage. In Cupriavidus necator (Alcaligenes eutrophus), this protein is Protein RecA.